The following is a 962-amino-acid chain: MLVVLLILHAVSCAHSHGSPGAAVPVKQCPSACQCEEDGILLLVDCSEQGLSSVPTDLSPLTSYLDLSMNNISEIQPNAFRNLHFLSELRLSGNHLRHIPGPMLQGLYNLKVLMLQNNQLERLPSEDPWELPNLLSLRLDANLIMEVPARTLSGMRSLRHLWLDDNALTEIPVSALNDLSSLQAMTLALNRITLIPDYAFRNLSNLVVLHLHNNMIRTLGQNCFEGLHSLETLELNFNDLQEFPVAIRTLAKLQELGFHNNNIKAIPERAFVGNPLLQTIHFYENPIQFVGRSAFQFLPKLHTLSLNGATEIREFPDLKGTTSLQVLTLTRAGLTSLPYDLCHLLPKLKVLELSHNVIEELPSFYHCTSLQEIGLQHNLIKQIEMNTFQQLGSLRSLDLSWNSINSIHPDAFFSLQSLIKLDLTGNRLSNLPMTGLTSLTHLKLKGNMALSRSFGLEDFPNIRVIEMPYAYQCCVFGGCSSYRSASQWEEQMGSEEEDFQKKSPSLFPIHTDNNYDLDLEEFQLAIEESKLQTSIQCTPIPGPFKPCDNLFDSWVVRLGMWLISLVSLMGNSLLILTVFTSPSYLSPVKFIIGTISGANLLTGLCTGTLALVDARTFGEFALHGAQWEMGAGCRAVGFLSVLASEGSILFLTLAAVQCSVSVSCARAYGKSPSLGSVRAAAVACLALSLAVAALPLIGVGEYGATPLCMPSPLPDGEPSTLGFMVALIMMNSLCFLVITGTYIKLYWDLMKGDFDSIWDCAMIKHVAWLIFTNCLLYCPVAFLTFSSLLSLFPVSEEVVKSVVLVLLPLPASINPLLYLLFNPHFREDMRLLLSRAHLNHDRNLDSFVSVDTEKSSYDSTQALVSFATEADGVFESLSVPNPETVARFTCPPSVALIPCQMQMKPSTDRENTGENLIRSAPGLIAKEQEHIRSSGVDTQNGTSIFSGAYHSTGPSAHSQVFT.

The signal sequence occupies residues 1 to 16; that stretch reads MLVVLLILHAVSCAHS. Residues 20-60 enclose the LRRNT domain; that stretch reads PGAAVPVKQCPSACQCEEDGILLLVDCSEQGLSSVPTDLSP. LRR repeat units lie at residues 38 to 58, 59 to 82, 83 to 106, 107 to 131, 133 to 154, 155 to 178, 179 to 202, 203 to 226, 228 to 250, 251 to 273, 275 to 297, 298 to 321, 322 to 344, 345 to 368, 370 to 390, 391 to 414, and 416 to 438; these read DGIL…PTDL, SPLT…AFRN, LHFL…MLQG, LYNL…PWEL, NLLS…TLSG, MRSL…ALND, LSSL…AFRN, LSNL…CFEG, HSLE…IRTL, AKLQ…AFVG, PLLQ…AFQF, LPKL…LKGT, TSLQ…LCHL, LPKL…YHCT, LQEI…TFQQ, LGSL…AFFS, and QSLI…GLTS. The N-linked (GlcNAc...) asparagine glycan is linked to Asn71. Residue Asn202 is glycosylated (N-linked (GlcNAc...) asparagine). Helical transmembrane passes span 559–579, 590–610, 647–669, 679–699, 723–743, 766–786, and 801–821; these read GMWL…LTVF, FIIG…GTLA, SILF…RAYG, AAAV…LIGV, FMVA…GTYI, VAWL…LTFS, and SVVL…YLLF. Cys633 and Cys708 are oxidised to a cystine.

It belongs to the G-protein coupled receptor 1 family.

It localises to the cell membrane. In terms of biological role, receptor for R-spondins that potentiates the canonical Wnt signaling pathway. Upon binding to R-spondins (rspo1, rspo2, rspo3 or rspo4), associates with phosphorylated lrp6 and frizzled receptors that are activated by extracellular Wnt receptors, triggering the canonical Wnt signaling pathway to increase expression of target genes. In contrast to classical G-protein coupled receptors, does not activate heterotrimeric G-proteins to transduce the signal. This Danio rerio (Zebrafish) protein is Leucine-rich repeat-containing G-protein coupled receptor 6 (lgr6).